The chain runs to 165 residues: Thiol peroxidase (165 aa).

A Thioredoxin domain is found at 18–165; the sequence is PAVGSPAPAF…YEAALAALGA (148 aa). Cys60 functions as the Cysteine sulfenic acid (-SOH) intermediate in the catalytic mechanism. Cys60 and Cys93 are oxidised to a cystine.

Belongs to the peroxiredoxin family. Tpx subfamily. As to quaternary structure, homodimer.

It catalyses the reaction a hydroperoxide + [thioredoxin]-dithiol = an alcohol + [thioredoxin]-disulfide + H2O. Thiol-specific peroxidase that catalyzes the reduction of hydrogen peroxide and organic hydroperoxides to water and alcohols, respectively. Plays a role in cell protection against oxidative stress by detoxifying peroxides. The chain is Thiol peroxidase from Mycobacterium bovis (strain ATCC BAA-935 / AF2122/97).